An 858-amino-acid polypeptide reads, in one-letter code: Bifunctional uridylyltransferase/uridylyl-removing enzyme (858 aa).

The interval 1–324 (MSASVAEPPP…PATSGVTRVL (324 aa)) is uridylyltransferase. The interval 325–681 (SPGRFVEKQG…ARPSPVGDAL (357 aa)) is uridylyl-removing. The region spanning 443-565 (VDQHILMVLR…VGSERRLTAL (123 aa)) is the HD domain. ACT domains lie at 682-761 (QVLV…PEPS) and 790-858 (ILSV…AIAV).

It belongs to the GlnD family. The cofactor is Mg(2+).

It catalyses the reaction [protein-PII]-L-tyrosine + UTP = [protein-PII]-uridylyl-L-tyrosine + diphosphate. The catalysed reaction is [protein-PII]-uridylyl-L-tyrosine + H2O = [protein-PII]-L-tyrosine + UMP + H(+). Uridylyltransferase (UTase) activity is inhibited by glutamine, while glutamine activates uridylyl-removing (UR) activity. Functionally, modifies, by uridylylation and deuridylylation, the PII regulatory proteins (GlnB and homologs), in response to the nitrogen status of the cell that GlnD senses through the glutamine level. Under low glutamine levels, catalyzes the conversion of the PII proteins and UTP to PII-UMP and PPi, while under higher glutamine levels, GlnD hydrolyzes PII-UMP to PII and UMP (deuridylylation). Thus, controls uridylylation state and activity of the PII proteins, and plays an important role in the regulation of nitrogen assimilation and metabolism. The chain is Bifunctional uridylyltransferase/uridylyl-removing enzyme from Burkholderia pseudomallei (strain 1106a).